The sequence spans 443 residues: Phosphoglucosamine mutase (443 aa).

S100 serves as the catalytic Phosphoserine intermediate. The Mg(2+) site is built by S100, D240, D242, and D244. S100 is modified (phosphoserine).

Belongs to the phosphohexose mutase family. Mg(2+) serves as cofactor. Post-translationally, activated by phosphorylation.

The catalysed reaction is alpha-D-glucosamine 1-phosphate = D-glucosamine 6-phosphate. Its function is as follows. Catalyzes the conversion of glucosamine-6-phosphate to glucosamine-1-phosphate. The polypeptide is Phosphoglucosamine mutase (Carboxydothermus hydrogenoformans (strain ATCC BAA-161 / DSM 6008 / Z-2901)).